The primary structure comprises 372 residues: MIYIIYRYRYCLVYTMDIFKELILKYPDENVLISPVSILSTLSILNHGAAGSTAEQLSKYIENVNENTPDDKKDDNNDMDVDVPYCATLAIANKIYCSDSIEFHASFLQKIKDDFQTVNFNNANQTKELINEWVKTMTNGKINSLLTSPLPINTRMTVVSAVHFKAMWKYPFSKHLTYTDKFYISKNIVTSVDMMVSTENDLQYVHINELFGGFSIIDIPYEGNSSMVIILPDDIEGLYNIEKHITEENFKKWCGKLYTKSIDLYMPKFKLKMTESYNLVPILENLGLTNIFGYYADFSKMCNETITVEKFLHKTFIDVNEEYTEASAITGVFMTNFSMVYRTKVYINHPFIYMIKDNTGRILFIGKYCYPQ.

The protein belongs to the serpin family. Poxviruses subfamily.

The protein localises to the host cytoplasm. Functionally, plays a role in mediating viral host range. May act to inhibit a caspase independent form of apoptosis to allow efficient virus replication in infected cells. The polypeptide is Serine proteinase inhibitor 1 (OPG208) (Homo sapiens (Human)).